A 698-amino-acid polypeptide reads, in one-letter code: Cytochrome c oxidase subunit 1 (698 aa).

The chain crosses the membrane as a helical span at residues 65 to 85 (INYLYFSMVTGLSGAALATMI). Residue E88 coordinates Ca(2+). Residue H111 coordinates Fe(II)-heme a. Helical transmembrane passes span 113–133 (LIMV…NFLI), 147–167 (LNSI…KIGF), 304–324 (ILIL…TNLL), 349–369 (IFLT…AVIM), 395–415 (LFWF…FGFI), 434–454 (IWAI…HMYL), 468–488 (ITIM…LSLV), and 498–518 (FLFS…GMWL). A Cu cation-binding site is contributed by H401. Positions 401–405 (HPEVY) form a cross-link, 1'-histidyl-3'-tyrosine (His-Tyr). Y405 is an O2 binding site. Residues H450 and H451 each contribute to the Cu cation site. Mg(2+) is bound by residues H528 and D529. 3 helical membrane passes run 533-553 (VVAH…FSGF), 574-594 (LIYY…LGFS), and 613-633 (MSTA…LMIF). H536 lines the heme a3 pocket. Fe(II)-heme a is bound at residue H538.

The protein belongs to the heme-copper respiratory oxidase family. Component of the cytochrome c oxidase (complex IV, CIV), a multisubunit enzyme composed of a catalytic core of 3 subunits and several supernumerary subunits. The complex exists as a monomer or a dimer and forms supercomplexes (SCs) in the inner mitochondrial membrane with ubiquinol-cytochrome c oxidoreductase (cytochrome b-c1 complex, complex III, CIII). It depends on heme as a cofactor. Requires Cu cation as cofactor.

The protein resides in the mitochondrion inner membrane. The catalysed reaction is 4 Fe(II)-[cytochrome c] + O2 + 8 H(+)(in) = 4 Fe(III)-[cytochrome c] + 2 H2O + 4 H(+)(out). It functions in the pathway energy metabolism; oxidative phosphorylation. In terms of biological role, component of the cytochrome c oxidase, the last enzyme in the mitochondrial electron transport chain which drives oxidative phosphorylation. The respiratory chain contains 3 multisubunit complexes succinate dehydrogenase (complex II, CII), ubiquinol-cytochrome c oxidoreductase (cytochrome b-c1 complex, complex III, CIII) and cytochrome c oxidase (complex IV, CIV), that cooperate to transfer electrons derived from NADH and succinate to molecular oxygen, creating an electrochemical gradient over the inner membrane that drives transmembrane transport and the ATP synthase. Cytochrome c oxidase is the component of the respiratory chain that catalyzes the reduction of oxygen to water. Electrons originating from reduced cytochrome c in the intermembrane space (IMS) are transferred via the dinuclear copper A center (CU(A)) of subunit 2 and heme A of subunit 1 to the active site in subunit 1, a binuclear center (BNC) formed by heme A3 and copper B (CU(B)). The BNC reduces molecular oxygen to 2 water molecules using 4 electrons from cytochrome c in the IMS and 4 protons from the mitochondrial matrix. In Tetrahymena pyriformis, this protein is Cytochrome c oxidase subunit 1 (COI).